The sequence spans 260 residues: Neuraminyllactose-binding hemagglutinin (260 aa).

Positions M1–G27 are cleaved as a signal peptide. Residue C28 is the site of N-palmitoyl cysteine attachment. The S-diacylglycerol cysteine moiety is linked to residue C28. The segment at K134 to K139 is N-acetyl-neuraminyl-alpha(2,3)-lactose binding motif.

The protein localises to the cell outer membrane. This is Neuraminyllactose-binding hemagglutinin (hpaA) from Helicobacter pylori (Campylobacter pylori).